Here is a 294-residue protein sequence, read N- to C-terminus: N-acetylmuramic acid 6-phosphate etherase (294 aa).

The SIS domain maps to 56 to 219 (TSYSLRNGGR…STLSMVSVGK (164 aa)). Glu84 functions as the Proton donor in the catalytic mechanism. Glu115 is an active-site residue.

It belongs to the GCKR-like family. MurNAc-6-P etherase subfamily. In terms of assembly, homodimer.

The catalysed reaction is N-acetyl-D-muramate 6-phosphate + H2O = N-acetyl-D-glucosamine 6-phosphate + (R)-lactate. It participates in amino-sugar metabolism; 1,6-anhydro-N-acetylmuramate degradation. The protein operates within amino-sugar metabolism; N-acetylmuramate degradation. It functions in the pathway cell wall biogenesis; peptidoglycan recycling. Specifically catalyzes the cleavage of the D-lactyl ether substituent of MurNAc 6-phosphate, producing GlcNAc 6-phosphate and D-lactate. Together with AnmK, is also required for the utilization of anhydro-N-acetylmuramic acid (anhMurNAc) either imported from the medium or derived from its own cell wall murein, and thus plays a role in cell wall recycling. The chain is N-acetylmuramic acid 6-phosphate etherase from Francisella tularensis subsp. tularensis (strain SCHU S4 / Schu 4).